Reading from the N-terminus, the 391-residue chain is Sister chromatid cohesion protein DCC1 (391 aa).

The protein belongs to the DCC1 family. Component of the ctf18-RFC complex which consists of ctf18, ctf8, dscc1 and the RFC complex.

The protein resides in the nucleus. Its function is as follows. Loads pcna onto primed templates regulating velocity, spacing and restart activity of replication forks. May couple DNA replication to sister chromatid cohesion. This is Sister chromatid cohesion protein DCC1 (dscc1) from Xenopus tropicalis (Western clawed frog).